We begin with the raw amino-acid sequence, 251 residues long: Adapter protein MecA (251 aa).

This sequence belongs to the MecA family. In terms of assembly, homodimer.

Functionally, enables the recognition and targeting of unfolded and aggregated proteins to the ClpC protease or to other proteins involved in proteolysis. The sequence is that of Adapter protein MecA from Streptococcus agalactiae serotype III (strain NEM316).